The sequence spans 331 residues: GTPase Obg (331 aa).

Residues 1–159 (MQFIDQARIA…RELQLELKLL (159 aa)) enclose the Obg domain. The 169-residue stretch at 160 to 328 (AEVGLVGLPN…LLQQVWQELG (169 aa)) folds into the OBG-type G domain. Residues 166–173 (GLPNAGKS), 191–195 (FTTLV), 213–216 (DIPG), 280–283 (SKSE), and 309–311 (SAV) contribute to the GTP site. Residues Ser173 and Thr193 each contribute to the Mg(2+) site.

This sequence belongs to the TRAFAC class OBG-HflX-like GTPase superfamily. OBG GTPase family. Monomer. The cofactor is Mg(2+).

It localises to the cytoplasm. Functionally, an essential GTPase which binds GTP, GDP and possibly (p)ppGpp with moderate affinity, with high nucleotide exchange rates and a fairly low GTP hydrolysis rate. Plays a role in control of the cell cycle, stress response, ribosome biogenesis and in those bacteria that undergo differentiation, in morphogenesis control. In Synechococcus sp. (strain RCC307), this protein is GTPase Obg.